A 26-amino-acid chain; its full sequence is Mitochondrial import receptor subunit TOM7-2 (26 aa).

The protein belongs to the Tom7 family. As to quaternary structure, forms part of the preprotein translocase complex of the outer mitochondrial membrane (TOM complex).

The protein resides in the mitochondrion outer membrane. In terms of biological role, seems to act as a modulator of the dynamics of the mitochondrial protein transport machinery. Seems to promote the dissociation of subunits of the outer membrane translocase. In Solanum tuberosum (Potato), this protein is Mitochondrial import receptor subunit TOM7-2 (TOM7-2).